The sequence spans 127 residues: UPF0325 protein VIBHAR_03240 (127 aa).

The protein belongs to the UPF0325 family.

The sequence is that of UPF0325 protein VIBHAR_03240 from Vibrio campbellii (strain ATCC BAA-1116).